Consider the following 193-residue polypeptide: Cerebellin-1 (193 aa).

An N-terminal signal peptide occupies residues 1-21 (MLGVLELLLLGAAWLAGPARG). The N-linked (GlcNAc...) asparagine glycan is linked to asparagine 23. Positions 34–38 (CLVVC) are essential for interaction with NRXN1 and linker of two C1q trimers into disulfide-linked hexamers. The C1q domain maps to 57-193 (SGSAKVAFSA…TFSGFLVFPL (137 aa)). Residues 62–193 (VAFSAIRSTN…TFSGFLVFPL (132 aa)) form a necessary for interaction with CBLN3, and homotrimerization region. Asparagine 79 carries an N-linked (GlcNAc...) asparagine glycan. The interval 122-147 (YNRQTIQVSLMLNGWPVISAFAGDQD) is essential for interaction with GRID2.

In terms of assembly, homohexamer; disulfide-linked homotrimers. The trimers associate via N-terminal cysteine residues to form disulfide-linked hexamers. May form oligomers with CBLN2, CBLN3 AND CBLN4 prior to secretion. Once secreted, does not interact with other CBLN family members. Interacts with GRID1. Interacts with NRXN1 and NRXN2 long (alpha) and short (beta) isoforms produced by alternative promoter usage. Competes with NLGN1 for NRXN1-binding. Weakly interacts with NRXN3 short isoform and not at all with NRXN3 long isoform. Interacts (via C1q domain) with GRID2; GRID2-binding is calcium-independent; CBLN1 hexamers anchor GRID2 N-terminal domain dimers to monomeric NRXN1 isoform beta; promotes synaptogenesis and mediates the D-Serine-dependent long term depression signals and AMPA receptor endocytosis. Interacts with OTOL1. The proteolytic processing to yield cerebellin seems to occur either prior to the secretion by presynaptic neurons and subsequent oligomerization or in some other location after release of the mature protein. In terms of processing, sialoglycoprotein. As to expression, in the Purkinje cells postsynaptic structures. In the cerebellum, cerebellin is much less abundant than [des-Ser1]-cerebellin.

The protein resides in the secreted. It is found in the postsynaptic cell membrane. Required for synapse integrity and synaptic plasticity. During cerebellar synapse formation, essential for the matching and maintenance of pre- and post-synaptic elements at parallel fiber-Purkinje cell synapses, the establishment of the proper pattern of climbing fiber-Purkinje cell innervation, and induction of long-term depression at parallel fiber-Purkinje cell synapses. Plays a role as a synaptic organizer that acts bidirectionally on both pre- and post-synaptic components. On the one hand induces accumulation of synaptic vesicles in the pre-synaptic part by binding with NRXN1 and in other hand induces clustering of GRID2 and its associated proteins at the post-synaptic site through association of GRID2. NRXN1-CBLN1-GRID2 complex directly induces parallel fiber protrusions that encapsulate spines of Purkinje cells leading to accumulation of GRID2 and synaptic vesicles. Required for CBLN3 export from the endoplasmic reticulum and secretion. NRXN1-CBLN1-GRID2 complex mediates the D-Serine-dependent long term depression signals and AMPA receptor endocytosis. Essential for long-term maintenance but not establishment of excitatory synapses. Inhibits the formation and function of inhibitory GABAergic synapses in cerebellar Purkinje cells. In terms of biological role, the cerebellin peptide exerts neuromodulatory functions. Directly stimulates norepinephrine release via the adenylate cyclase/PKA-dependent signaling pathway; and indirectly enhances adrenocortical secretion in vivo, through a paracrine mechanism involving medullary catecholamine release. The protein is Cerebellin-1 (CBLN1) of Homo sapiens (Human).